The chain runs to 177 residues: Alkyl hydroperoxide reductase AhpD (177 aa).

The Proton donor role is filled by Cys131. Cys131 and Cys134 are joined by a disulfide. The active-site Cysteine sulfenic acid (-SOH) intermediate is Cys134.

This sequence belongs to the AhpD family. Homotrimer.

The enzyme catalyses N(6)-[(R)-dihydrolipoyl]-L-lysyl-[lipoyl-carrier protein] + a hydroperoxide = N(6)-[(R)-lipoyl]-L-lysyl-[lipoyl-carrier protein] + an alcohol + H2O. In terms of biological role, antioxidant protein with alkyl hydroperoxidase activity. Required for the reduction of the AhpC active site cysteine residues and for the regeneration of the AhpC enzyme activity. This Streptomyces avermitilis (strain ATCC 31267 / DSM 46492 / JCM 5070 / NBRC 14893 / NCIMB 12804 / NRRL 8165 / MA-4680) protein is Alkyl hydroperoxide reductase AhpD.